A 415-amino-acid chain; its full sequence is WD repeat and FYVE domain-containing protein 2 (415 aa).

4 WD repeats span residues 71–103 (HHFM…YEFS), 119–148 (CHAG…IVWH), 202–232 (AHTN…IMWD), and 245–284 (GHNG…VETP). The segment at 286–357 (WKTSDCCQKC…ICNDCNARMK (72 aa)) adopts an FYVE-type zinc-finger fold. Residues cysteine 292, cysteine 295, cysteine 319, cysteine 322, cysteine 327, cysteine 330, cysteine 349, and cysteine 352 each coordinate Zn(2+). One copy of the WD 5 repeat lies at 373-403 (EIHTGITAMHLQETLGLLVTSGQNRVIMIWD).

Its function is as follows. Plays a role in coelomocyte endocytosis. The polypeptide is WD repeat and FYVE domain-containing protein 2 (wdfy-2) (Caenorhabditis elegans).